We begin with the raw amino-acid sequence, 368 residues long: 3-dehydroquinate synthase (368 aa).

NAD(+) contacts are provided by residues 71–76 (DGESFK), 105–109 (GVIGD), 129–130 (TT), lysine 142, lysine 151, and 169–172 (TLRT). Glutamate 184, histidine 247, and histidine 264 together coordinate Zn(2+).

It belongs to the sugar phosphate cyclases superfamily. Dehydroquinate synthase family. The cofactor is NAD(+). Co(2+) is required as a cofactor. Zn(2+) serves as cofactor.

The protein localises to the cytoplasm. It catalyses the reaction 7-phospho-2-dehydro-3-deoxy-D-arabino-heptonate = 3-dehydroquinate + phosphate. It participates in metabolic intermediate biosynthesis; chorismate biosynthesis; chorismate from D-erythrose 4-phosphate and phosphoenolpyruvate: step 2/7. Catalyzes the conversion of 3-deoxy-D-arabino-heptulosonate 7-phosphate (DAHP) to dehydroquinate (DHQ). The sequence is that of 3-dehydroquinate synthase from Ralstonia nicotianae (strain ATCC BAA-1114 / GMI1000) (Ralstonia solanacearum).